Consider the following 337-residue polypeptide: Biotin synthase (337 aa).

The Radical SAM core domain occupies 55–284 (YFKNTIELCS…KKTILLAGGK (230 aa)). [4Fe-4S] cluster is bound by residues Cys73, Cys77, and Cys80. Positions 117, 149, and 209 each coordinate [2Fe-2S] cluster.

It belongs to the radical SAM superfamily. Biotin synthase family. As to quaternary structure, homodimer. It depends on [4Fe-4S] cluster as a cofactor. [2Fe-2S] cluster is required as a cofactor.

The enzyme catalyses (4R,5S)-dethiobiotin + (sulfur carrier)-SH + 2 reduced [2Fe-2S]-[ferredoxin] + 2 S-adenosyl-L-methionine = (sulfur carrier)-H + biotin + 2 5'-deoxyadenosine + 2 L-methionine + 2 oxidized [2Fe-2S]-[ferredoxin]. The protein operates within cofactor biosynthesis; biotin biosynthesis; biotin from 7,8-diaminononanoate: step 2/2. Its function is as follows. Catalyzes the conversion of dethiobiotin (DTB) to biotin by the insertion of a sulfur atom into dethiobiotin via a radical-based mechanism. The chain is Biotin synthase from Caldicellulosiruptor bescii (strain ATCC BAA-1888 / DSM 6725 / KCTC 15123 / Z-1320) (Anaerocellum thermophilum).